We begin with the raw amino-acid sequence, 115 residues long: Large ribosomal subunit protein bL19 (115 aa).

It belongs to the bacterial ribosomal protein bL19 family.

In terms of biological role, this protein is located at the 30S-50S ribosomal subunit interface and may play a role in the structure and function of the aminoacyl-tRNA binding site. This is Large ribosomal subunit protein bL19 from Klebsiella pneumoniae (strain 342).